The sequence spans 260 residues: DNA repair protein RecO (260 aa).

Belongs to the RecO family.

Functionally, involved in DNA repair and RecF pathway recombination. This Ligilactobacillus salivarius (strain UCC118) (Lactobacillus salivarius) protein is DNA repair protein RecO.